The following is a 158-amino-acid chain: Extracellular giant hemoglobin major globin subunit A2 (158 aa).

An N-terminal signal peptide occupies residues 1–16 (MKSLIVFACLVAYAAA). Residues 17 to 158 (DCTSLNRLLV…MNQIVSGISG (142 aa)) form the Globin domain. Cys18 and Cys148 form a disulfide bridge. Cys89 provides a ligand contact to hydrogen sulfide. His110 contacts heme b.

Belongs to the globin family. The 400 kDa hemoglobin consists of a spherical 24-mer arranged as a double layer of dome-shaped dodecamers. Each dodecamer is composed of the 3-fold trimer of the tetramer A1-A2-B1-B2 having one intra-tetramer (A1-B2) disulfide bond and one inter-tetramer (B1-B2) disulfide bond per tetramer.

The protein localises to the secreted. Its function is as follows. The extracellular giant hemoglobin is able to bind and transport oxygen and hydrosulfide simultaneously and reversibly at two different sites. This Oligobrachia mashikoi (Beard worm) protein is Extracellular giant hemoglobin major globin subunit A2 (ghbA2).